The chain runs to 232 residues: Putative homeobox protein NANOG2 (232 aa).

The segment at 1–39 is disordered; sequence MDLPIQDSHDSSTSPKGKQPTTAEKSATKKEDKVPVKKQ. Polar residues predominate over residues 11-25; that stretch reads SSTSPKGKQPTTAEK. Basic and acidic residues predominate over residues 26 to 35; it reads SATKKEDKVP. 8 consecutive repeat copies span residues 123 to 127, 128 to 132, 133 to 137, 143 to 147, 148 to 152, 153 to 157, 158 to 162, and 163 to 167. The interval 123–167 is 8 X repeats starting with a Trp in each unit; that stretch reads WSNQTWNNSTWSNQTQNIQSWSNHSWNTQTWCTQSWNNQAWNSPF. The tract at residues 123-167 is sufficient for transactivation activity; sequence WSNQTWNNSTWSNQTQNIQSWSNHSWNTQTWCTQSWNNQAWNSPF. The sufficient for strong transactivation activity stretch occupies residues 168–232; the sequence is YNCGEESLQS…YSTNMXXEDV (65 aa).

It belongs to the Nanog homeobox family.

The protein localises to the nucleus. Its function is as follows. Probable transcriptional regulator. This chain is Putative homeobox protein NANOG2 (NANOGP1), found in Pan paniscus (Pygmy chimpanzee).